Reading from the N-terminus, the 211-residue chain is Protein GrpE (211 aa).

Over residues 1–10 (MTDDTKKPGP) the composition is skewed to basic and acidic residues. Disordered stretches follow at residues 1-37 (MTDD…PDPV) and 187-211 (AKGG…EKDA). The segment covering 27 to 36 (EQAETAEPDP) has biased composition (acidic residues). The segment covering 201–211 (PGTSSLNEKDA) has biased composition (polar residues).

Belongs to the GrpE family. As to quaternary structure, homodimer.

The protein localises to the cytoplasm. Its function is as follows. Participates actively in the response to hyperosmotic and heat shock by preventing the aggregation of stress-denatured proteins, in association with DnaK and GrpE. It is the nucleotide exchange factor for DnaK and may function as a thermosensor. Unfolded proteins bind initially to DnaJ; upon interaction with the DnaJ-bound protein, DnaK hydrolyzes its bound ATP, resulting in the formation of a stable complex. GrpE releases ADP from DnaK; ATP binding to DnaK triggers the release of the substrate protein, thus completing the reaction cycle. Several rounds of ATP-dependent interactions between DnaJ, DnaK and GrpE are required for fully efficient folding. This is Protein GrpE from Agrobacterium fabrum (strain C58 / ATCC 33970) (Agrobacterium tumefaciens (strain C58)).